Reading from the N-terminus, the 590-residue chain is MEPRAGCRLPVRVEQVVNGALVVTVSCGERSFAGILLDCTKKSGLFGLPPLAPLPQVDESPVNDSHGRAPEEGDAEVMQLGSSSPPPARGVQPPETTRPEPPPPLVPPLPAGSLPPYPPYFEGAPFPHPLWLRDTYKLWVPQPPPRTIKRTRRRLSRNRDPGRLILSTIRLRPRQVLCEKCKSTLSPPEASPGPPAAPRARRRLGSGPDRELRKPEEPENGEPTAAATARRSKRERREEDRAPAEQVPRSPVIKISYSTPQGKGEVVKIPSRVHGSLEPFRPQQAPQDDGSQDPEVLDRESRDRPSCAPSASIPKLKLTRPVPAGADLPPPKIRLKPHRLGDSEHEPVYRAELVGELNGYLRDSSPAPCADGPAGGLADLSSGSSGEDDDFKSCPQGPQGREGLAFLVSCPEGRADCASESACSSDSLDEARSSGSEGTPADTGDLSPGHGASAPSVSREARQTVPPLTVRLHTQSVSECITEDGRTVAVGDIVWGKIHGFPWWPARVLDISLGQKEDGEPSWREAKVSWFGSPTTSFLSISKLSPFSEFFKLRFNRKKKGMYRKAITEAANAARHVAPEIRELLTQFET.

Disordered regions lie at residues Ala52–Pro110, Lys182–Pro347, Tyr360–Pro398, and Asp426–Pro467. Ser84 is modified (phosphoserine). Over residues Pro99 to Pro110 the composition is skewed to pro residues. 2 positions are modified to phosphoserine: Ser186 and Ser206. Positions Pro208 to Glu217 are enriched in basic and acidic residues. Residue Ser250 is modified to Phosphoserine. Residues Val296–Pro305 are compositionally biased toward basic and acidic residues. The span at Gly376–Ser385 shows a compositional bias: low complexity. A Phosphoserine modification is found at Ser447. One can recognise a PWWP domain in the interval Val490–Phe550.

Component of a MTA1-specific subcomplex of the NuRD complex composed of PWWP2B, MTA1 and HDAC1 but does not contain CHD4 and MBD3. Interacts with MTA1 and HDAC1. Interacts with MTA2, MTA3, HDAC2, RBBP4, RBBP7, BRCC3 and ZNF516. Does not interact with CHD4 and MBD3. Post-translationally, deubiquitinated by BRCC3; leading to its stabilization.

In terms of biological role, chromatin-binding protein that acts as an adapter between distinct nucleosome components (H3K36me3 or H2A.Z) and chromatin-modifying complexes, contributing to the regulation of the levels of histone acetylation at actively transcribed genes. Competes with CHD4 and MBD3 for interaction with MTA1 to form a NuRD subcomplex, preventing the formation of full NuRD complex (containing CHD4 and MBD3), leading to recruitment of HDACs to gene promoters resulting in turn in the deacetylation of nearby H3K27 and H2A.Z. Plays a role in facilitating transcriptional elongation through regulation of histone acetylation. Negatively regulates brown adipocyte thermogenesis by interacting with and stabilizing HDAC1 at the UCP1 gene promoter, thereby promoting histone deacetylation at the promoter leading to the repression of UCP1 expression. This chain is PWWP domain-containing protein 2B (PWWP2B), found in Homo sapiens (Human).